Here is a 404-residue protein sequence, read N- to C-terminus: Argininosuccinate synthase (404 aa).

ATP is bound by residues 12–20 (AYSGGLDTS) and Ala-40. L-citrulline-binding residues include Tyr-92 and Ser-97. Gly-122 lines the ATP pocket. L-aspartate is bound by residues Thr-124, Asn-128, and Asp-129. Asn-128 is an L-citrulline binding site. The L-citrulline site is built by Arg-132, Ser-181, Ser-190, Glu-266, and Tyr-278.

The protein belongs to the argininosuccinate synthase family. Type 1 subfamily. In terms of assembly, homotetramer.

It is found in the cytoplasm. The enzyme catalyses L-citrulline + L-aspartate + ATP = 2-(N(omega)-L-arginino)succinate + AMP + diphosphate + H(+). It functions in the pathway amino-acid biosynthesis; L-arginine biosynthesis; L-arginine from L-ornithine and carbamoyl phosphate: step 2/3. The chain is Argininosuccinate synthase from Photorhabdus laumondii subsp. laumondii (strain DSM 15139 / CIP 105565 / TT01) (Photorhabdus luminescens subsp. laumondii).